A 262-amino-acid chain; its full sequence is Zinc import ATP-binding protein ZnuC (262 aa).

Positions 4 to 220 (LNLSGVRLSH…PEYLALFGPR (217 aa)) constitute an ABC transporter domain. 36–43 (GPNGAGKS) is an ATP binding site. Positions 238–262 (ADGSVLPLAEGGGEPHTHGPGCRHG) are disordered.

Belongs to the ABC transporter superfamily. Zinc importer (TC 3.A.1.15.5) family. As to quaternary structure, the complex is composed of two ATP-binding proteins (ZnuC), two transmembrane proteins (ZnuB) and a solute-binding protein (ZnuA).

The protein localises to the cell inner membrane. It catalyses the reaction Zn(2+)(out) + ATP(in) + H2O(in) = Zn(2+)(in) + ADP(in) + phosphate(in) + H(+)(in). In terms of biological role, part of the ABC transporter complex ZnuABC involved in zinc import. Responsible for energy coupling to the transport system. This is Zinc import ATP-binding protein ZnuC from Paramagnetospirillum magneticum (strain ATCC 700264 / AMB-1) (Magnetospirillum magneticum).